The following is a 147-amino-acid chain: UPF0306 protein YhbP (147 aa).

This sequence belongs to the UPF0306 family.

The sequence is that of UPF0306 protein YhbP from Escherichia coli O6:K15:H31 (strain 536 / UPEC).